Consider the following 698-residue polypeptide: DNA-directed RNA polymerase subunit beta' (698 aa).

Residues Cys-69, Cys-71, Cys-89, and Cys-92 each coordinate Zn(2+). Mg(2+) contacts are provided by Asp-509, Asp-511, and Asp-513.

Belongs to the RNA polymerase beta' chain family. RpoC1 subfamily. In plastids the minimal PEP RNA polymerase catalytic core is composed of four subunits: alpha, beta, beta', and beta''. When a (nuclear-encoded) sigma factor is associated with the core the holoenzyme is formed, which can initiate transcription. Requires Mg(2+) as cofactor. Zn(2+) serves as cofactor.

The protein resides in the plastid. It localises to the chloroplast. It catalyses the reaction RNA(n) + a ribonucleoside 5'-triphosphate = RNA(n+1) + diphosphate. DNA-dependent RNA polymerase catalyzes the transcription of DNA into RNA using the four ribonucleoside triphosphates as substrates. In Cryptomeria japonica (Japanese cedar), this protein is DNA-directed RNA polymerase subunit beta'.